A 351-amino-acid chain; its full sequence is ABC transporter nucleoside-binding protein BmpA (351 aa).

An N-terminal signal peptide occupies residues methionine 1–glycine 21. Residue cysteine 22 is the site of N-palmitoyl cysteine attachment. A lipid anchor (S-diacylglycerol cysteine) is attached at cysteine 22.

This sequence belongs to the BMP lipoprotein family. As to quaternary structure, the complex is composed of two ATP-binding proteins (NupA), two transmembrane proteins (NupB and NupC) and a solute-binding protein (BmpA).

It localises to the cell membrane. Part of an ABC transporter complex involved in the uptake of all common nucleosides. The polypeptide is ABC transporter nucleoside-binding protein BmpA (Lactococcus lactis subsp. cremoris (strain MG1363)).